Consider the following 326-residue polypeptide: Vomeronasal type-1 receptor 94 (326 aa).

At methionine 1–threonine 32 the chain is on the extracellular side. A helical membrane pass occupies residues phenylalanine 33–phenylalanine 53. Residues lysine 54 to aspartate 65 lie on the Cytoplasmic side of the membrane. The helical transmembrane segment at leucine 66 to alanine 86 threads the bilayer. Over threonine 87–serine 110 the chain is Extracellular. Cysteine 101 and cysteine 188 are disulfide-bonded. Residues phenylalanine 111 to leucine 130 traverse the membrane as a helical segment. The Cytoplasmic segment spans residues serine 131–cysteine 150. A helical transmembrane segment spans residues alanine 151–isoleucine 171. At alanine 172–threonine 203 the chain is on the extracellular side. N-linked (GlcNAc...) asparagine glycosylation is present at asparagine 175. The chain crosses the membrane as a helical span at residues leucine 204 to valine 224. Over alanine 225 to histidine 254 the chain is Cytoplasmic. A helical membrane pass occupies residues serine 255–cysteine 275. The Extracellular segment spans residues serine 276–threonine 285. A helical transmembrane segment spans residues serine 286–methionine 306. Residues serine 307–valine 326 lie on the Cytoplasmic side of the membrane.

This sequence belongs to the G-protein coupled receptor 1 family.

The protein localises to the cell membrane. In terms of biological role, putative pheromone receptor implicated in the regulation of social as well as reproductive behavior. This Rattus norvegicus (Rat) protein is Vomeronasal type-1 receptor 94 (Vom1r94).